Consider the following 132-residue polypeptide: Small ribosomal subunit protein uS8 (132 aa).

This sequence belongs to the universal ribosomal protein uS8 family. As to quaternary structure, part of the 30S ribosomal subunit. Contacts proteins S5 and S12.

Functionally, one of the primary rRNA binding proteins, it binds directly to 16S rRNA central domain where it helps coordinate assembly of the platform of the 30S subunit. The sequence is that of Small ribosomal subunit protein uS8 from Limosilactobacillus reuteri (strain DSM 20016) (Lactobacillus reuteri).